The sequence spans 495 residues: UDP-N-acetylmuramoyl-L-alanyl-D-glutamate--2,6-diaminopimelate ligase (495 aa).

Ser29 is a binding site for UDP-N-acetyl-alpha-D-muramoyl-L-alanyl-D-glutamate. 111-117 (GTNGKTS) contacts ATP. UDP-N-acetyl-alpha-D-muramoyl-L-alanyl-D-glutamate-binding positions include 153–154 (TT), Ser180, Gln186, and Arg188. An N6-carboxylysine modification is found at Lys220. Meso-2,6-diaminopimelate-binding positions include Arg384, 408–411 (DNPR), Gly459, and Glu463. The short motif at 408–411 (DNPR) is the Meso-diaminopimelate recognition motif element.

Belongs to the MurCDEF family. MurE subfamily. Mg(2+) serves as cofactor. Carboxylation is probably crucial for Mg(2+) binding and, consequently, for the gamma-phosphate positioning of ATP.

It localises to the cytoplasm. It carries out the reaction UDP-N-acetyl-alpha-D-muramoyl-L-alanyl-D-glutamate + meso-2,6-diaminopimelate + ATP = UDP-N-acetyl-alpha-D-muramoyl-L-alanyl-gamma-D-glutamyl-meso-2,6-diaminopimelate + ADP + phosphate + H(+). Its pathway is cell wall biogenesis; peptidoglycan biosynthesis. Its function is as follows. Catalyzes the addition of meso-diaminopimelic acid to the nucleotide precursor UDP-N-acetylmuramoyl-L-alanyl-D-glutamate (UMAG) in the biosynthesis of bacterial cell-wall peptidoglycan. The protein is UDP-N-acetylmuramoyl-L-alanyl-D-glutamate--2,6-diaminopimelate ligase of Xylella fastidiosa (strain 9a5c).